A 315-amino-acid chain; its full sequence is 4-hydroxy-3-methylbut-2-enyl diphosphate reductase (315 aa).

Residue Cys12 coordinates [4Fe-4S] cluster. Residues His41 and His74 each contribute to the (2E)-4-hydroxy-3-methylbut-2-enyl diphosphate site. Dimethylallyl diphosphate is bound by residues His41 and His74. Isopentenyl diphosphate is bound by residues His41 and His74. Cys96 contacts [4Fe-4S] cluster. His124 is a (2E)-4-hydroxy-3-methylbut-2-enyl diphosphate binding site. Position 124 (His124) interacts with dimethylallyl diphosphate. His124 is a binding site for isopentenyl diphosphate. Glu126 (proton donor) is an active-site residue. Thr168 lines the (2E)-4-hydroxy-3-methylbut-2-enyl diphosphate pocket. Residue Cys198 participates in [4Fe-4S] cluster binding. Ser226, Ser227, Asn228, and Ser270 together coordinate (2E)-4-hydroxy-3-methylbut-2-enyl diphosphate. Dimethylallyl diphosphate contacts are provided by Ser226, Ser227, Asn228, and Ser270. Residues Ser226, Ser227, Asn228, and Ser270 each contribute to the isopentenyl diphosphate site.

This sequence belongs to the IspH family. It depends on [4Fe-4S] cluster as a cofactor.

It catalyses the reaction isopentenyl diphosphate + 2 oxidized [2Fe-2S]-[ferredoxin] + H2O = (2E)-4-hydroxy-3-methylbut-2-enyl diphosphate + 2 reduced [2Fe-2S]-[ferredoxin] + 2 H(+). The catalysed reaction is dimethylallyl diphosphate + 2 oxidized [2Fe-2S]-[ferredoxin] + H2O = (2E)-4-hydroxy-3-methylbut-2-enyl diphosphate + 2 reduced [2Fe-2S]-[ferredoxin] + 2 H(+). The protein operates within isoprenoid biosynthesis; dimethylallyl diphosphate biosynthesis; dimethylallyl diphosphate from (2E)-4-hydroxy-3-methylbutenyl diphosphate: step 1/1. It functions in the pathway isoprenoid biosynthesis; isopentenyl diphosphate biosynthesis via DXP pathway; isopentenyl diphosphate from 1-deoxy-D-xylulose 5-phosphate: step 6/6. Its function is as follows. Catalyzes the conversion of 1-hydroxy-2-methyl-2-(E)-butenyl 4-diphosphate (HMBPP) into a mixture of isopentenyl diphosphate (IPP) and dimethylallyl diphosphate (DMAPP). Acts in the terminal step of the DOXP/MEP pathway for isoprenoid precursor biosynthesis. This Pseudomonas putida (strain ATCC 700007 / DSM 6899 / JCM 31910 / BCRC 17059 / LMG 24140 / F1) protein is 4-hydroxy-3-methylbut-2-enyl diphosphate reductase.